We begin with the raw amino-acid sequence, 172 residues long: MERAIQGNDAREQAYGERWNGGPGGSTSPFQLPDESPSWTEWRLHNDETNSNQDNPLGFKESWGFGKVVFKRYLRYERTETSLHRVLGSWTGDSVNYAASRFLGFDQIGCTYSIRFRGVSVTISGGSRTLQHLSEMAIRSKQELLQLTPVKVESNVSRGRPEGVETFKEESE.

Over residues 1-15 the composition is skewed to basic and acidic residues; it reads MERAIQGNDAREQAY. Residues 1 to 38 form a disordered region; sequence MERAIQGNDAREQAYGERWNGGPGGSTSPFQLPDESPS.

It belongs to the tombusvirus protein p19 family. In terms of assembly, homodimer.

Its function is as follows. Viral suppressor of RNA silencing which binds specifically to silencing RNAs (siRNAs). Acts as a molecular caliper to specifically select siRNAs based on the length of the duplex region of the RNA. The protein is RNA silencing suppressor p19 of Tomato bushy stunt virus (strain A23) (TBSV).